We begin with the raw amino-acid sequence, 482 residues long: Programmed cell death protein 7 (482 aa).

2 disordered regions span residues 1-136 and 151-170; these read MALP…GDAA and GNPR…GPSL. The segment covering 13 to 48 has biased composition (pro residues); that stretch reads GPPPPQPPPSAPFGCPPPPLPSPAFPPPLPQRPGPF. Low complexity predominate over residues 49 to 71; sequence PGASAPFLQPPLALQPRAPAEAS. 2 stretches are compositionally biased toward pro residues: residues 82 to 100 and 109 to 130; these read PVPP…PFPG and PPPP…PPPD. A compositionally biased stretch (low complexity) spans 151-168; sequence GNPRRPGGLRTPRTPAGP. The stretch at 233–408 forms a coiled coil; it reads EARRRLERVR…LQKREIESKL (176 aa).

In terms of assembly, interacts with RBM40. Component of the U11/U12 snRNPs that are part of the U12-type spliceosome. Highly expressed in testis, thymus and lymph nodes. Detected at low levels in embryonic stem cells.

Its subcellular location is the nucleus. Functionally, promotes apoptosis when overexpressed. The sequence is that of Programmed cell death protein 7 (Pdcd7) from Mus musculus (Mouse).